The following is a 663-amino-acid chain: DNA topoisomerase 4 subunit B (663 aa).

Residues tyrosine 7, asparagine 47, aspartate 74, 114 to 120, and lysine 341 each bind ATP; that span reads GLHGVGA. Residues 386 to 416 form a disordered region; the sequence is REAARKAREDARSGKKNKRKDTLLSGKLTPA. A compositionally biased stretch (basic and acidic residues) spans 387–398; that stretch reads EAARKAREDARS. Residues 424–538 enclose the Toprim domain; sequence NELYLVEGDS…AGRVFIALPP (115 aa). 3 residues coordinate Mg(2+): glutamate 430, aspartate 503, and aspartate 505.

Belongs to the type II topoisomerase family. ParE type 2 subfamily. As to quaternary structure, heterotetramer composed of ParC and ParE. It depends on Mg(2+) as a cofactor. Mn(2+) serves as cofactor. Ca(2+) is required as a cofactor.

It catalyses the reaction ATP-dependent breakage, passage and rejoining of double-stranded DNA.. Functionally, topoisomerase IV is essential for chromosome segregation. It relaxes supercoiled DNA. Performs the decatenation events required during the replication of a circular DNA molecule. The polypeptide is DNA topoisomerase 4 subunit B (Staphylococcus aureus (strain NCTC 8325 / PS 47)).